Consider the following 362-residue polypeptide: Innexin inx1 (362 aa).

At 1-28 the chain is on the cytoplasmic side; the sequence is MYKLLGSLKSYLKWQDIQTDNAVFRLHN. A helical membrane pass occupies residues 29–49; sequence SFTTVLLLTCSLIITATQYVG. The Extracellular segment spans residues 50–110; that stretch reads QPISCIVNGV…DAKKYYTYYQ (61 aa). The chain crosses the membrane as a helical span at residues 111–131; it reads WVCFVLFFQAMACYTPKFLWN. Topologically, residues 132–177 are cytoplasmic; that stretch reads KFEGGLMRMIVMGLNITICTREEKEAKRDALLDYLIKHVKRHKLYA. A helical transmembrane segment spans residues 178–198; that stretch reads IRYWACEFLCCINIIVQMYLM. At 199 to 267 the chain is on the extracellular side; sequence NRFFDGEFLS…LPLNIVNEKT (69 aa). Residues 268–288 form a helical membrane-spanning segment; the sequence is YVFIWFWFWILLVLLIGLIVF. Residues 289-362 lie on the Cytoplasmic side of the membrane; it reads RGCIIFMPKF…VEPSKHDRAK (74 aa).

The protein belongs to the pannexin family. In terms of assembly, heterooligomer of Inx2 and ogre. In terms of tissue distribution, in ovary, expressed in follicle cells. Expressed around the periphery of the embryo during cellular blastoderm formation. Repeating epidermal pattern emerges from stage 11, high levels of expression detected along the borders of each segment from stage 13. At stage 13, expressed in the dorsal branch of the tracheal system. During stage 15, detected in a few cells at each of the branch points of the dorsal trunk and at low levels in cardioblasts. In embryos, also expressed in the salivary gland and the hindgut (at protein level). At stage 17, expressed in the dorsal side of the CNS. Expressed in the imaginal wing disk. Expressed in larval CNS and in tissues outside of the CNS. In pupae, expressed in the CNS and in primary, secondary and tertiary pigment cells of the retina.

The protein localises to the cell membrane. Its subcellular location is the cell junction. The protein resides in the gap junction. It is found in the basolateral cell membrane. In terms of biological role, structural component of the gap junctions. Essential for generation and/or maintenance of postembryonic neuroblasts and normal development of optic lobe. In Drosophila melanogaster (Fruit fly), this protein is Innexin inx1 (ogre).